The primary structure comprises 119 residues: Beta-2-microglobulin (119 aa).

Residues 1–20 form the signal peptide; it reads MARSVVVALLVLLSLSGLEA. The Ig-like C1-type domain occupies 25–114; the sequence is PKIQVYSRHP…VTFPTPKTVK (90 aa). Cys-45 and Cys-100 form a disulfide bridge.

The protein belongs to the beta-2-microglobulin family. As to quaternary structure, heterodimer of an alpha chain and a beta chain. Beta-2-microglobulin is the beta-chain of major histocompatibility complex class I molecules.

Its subcellular location is the secreted. In terms of biological role, component of the class I major histocompatibility complex (MHC). Involved in the presentation of peptide antigens to the immune system. The sequence is that of Beta-2-microglobulin (B2M) from Lagothrix lagotricha (Brown woolly monkey).